We begin with the raw amino-acid sequence, 243 residues long: MTKIFAHRGASGQFPENTMLAFEKGIEAGADGIELDVQLTKDGRIVVIHDERLNRTTSLKGFVKDTAYDEVKTANAAAGHDQAYSDIKVPLLEDVLSWAVKKDFLINIELKNSVIRYEGMEEKVLEAVKRFNVEDRVILSTFNHDSLALCARLAPHIERAVLTSDVLYQADRYIASIPASGYHPKINSPGVTDEVLKKMRNGLIKVRPYTVNRPEDMKRLIEAGADGMFTDFPEKASALLKNE.

Residues 2-240 (TKIFAHRGAS…DFPEKASALL (239 aa)) form the GP-PDE domain.

This is an uncharacterized protein from Bacillus subtilis (strain 168).